A 426-amino-acid chain; its full sequence is Histidine--tRNA ligase (426 aa).

It belongs to the class-II aminoacyl-tRNA synthetase family. Homodimer.

It is found in the cytoplasm. The enzyme catalyses tRNA(His) + L-histidine + ATP = L-histidyl-tRNA(His) + AMP + diphosphate + H(+). The protein is Histidine--tRNA ligase of Legionella pneumophila (strain Paris).